Consider the following 184-residue polypeptide: Isopentenyl-diphosphate Delta-isomerase (184 aa).

2 residues coordinate Mn(2+): His25 and His32. The Nudix hydrolase domain occupies Pro30 to Leu164. Residue Cys67 is part of the active site. His69 contacts Mn(2+). Glu87 contacts Mg(2+). The Mn(2+) site is built by Glu114 and Glu116. The active site involves Glu116.

This sequence belongs to the IPP isomerase type 1 family. Homodimer. It depends on Mg(2+) as a cofactor. Requires Mn(2+) as cofactor.

The protein resides in the cytoplasm. It catalyses the reaction isopentenyl diphosphate = dimethylallyl diphosphate. The protein operates within isoprenoid biosynthesis; dimethylallyl diphosphate biosynthesis; dimethylallyl diphosphate from isopentenyl diphosphate: step 1/1. Catalyzes the 1,3-allylic rearrangement of the homoallylic substrate isopentenyl (IPP) to its highly electrophilic allylic isomer, dimethylallyl diphosphate (DMAPP). The protein is Isopentenyl-diphosphate Delta-isomerase of Klebsiella pneumoniae (strain 342).